The chain runs to 324 residues: Putative glycosyltransferase R655 (324 aa).

Belongs to the glycosyltransferase 25 family.

In Acanthamoeba polyphaga (Amoeba), this protein is Putative glycosyltransferase R655.